The primary structure comprises 207 residues: Large ribosomal subunit protein uL3 (207 aa).

Belongs to the universal ribosomal protein uL3 family. As to quaternary structure, part of the 50S ribosomal subunit. Forms a cluster with proteins L14 and L19.

Its function is as follows. One of the primary rRNA binding proteins, it binds directly near the 3'-end of the 23S rRNA, where it nucleates assembly of the 50S subunit. The polypeptide is Large ribosomal subunit protein uL3 (Fervidobacterium nodosum (strain ATCC 35602 / DSM 5306 / Rt17-B1)).